The primary structure comprises 298 residues: Tyrosine recombinase XerC (298 aa).

Residues 2 to 88 (TDLHTDVERY…ALRSFFDWLV (87 aa)) enclose the Core-binding (CB) domain. The Tyr recombinase domain maps to 109-288 (HLPKNIDVDD…DFQHLASVYD (180 aa)). Residues arginine 148, lysine 172, histidine 240, arginine 243, and histidine 266 contribute to the active site. The active-site O-(3'-phospho-DNA)-tyrosine intermediate is tyrosine 275.

This sequence belongs to the 'phage' integrase family. XerC subfamily. Forms a cyclic heterotetrameric complex composed of two molecules of XerC and two molecules of XerD, in which XerC interacts with XerD via its C-terminal region, XerD interacts with XerC via its C-terminal region and so on.

The protein resides in the cytoplasm. Its activity is regulated as follows. FtsK may regulate the catalytic switch between XerC and XerD in the heterotetrameric complex during the two steps of the recombination process. Its function is as follows. Site-specific tyrosine recombinase, which acts by catalyzing the cutting and rejoining of the recombining DNA molecules. Binds cooperatively to specific DNA consensus sequences that are separated from XerD binding sites by a short central region, forming the heterotetrameric XerC-XerD complex that recombines DNA substrates. The complex is essential to convert dimers of the bacterial chromosome into monomers to permit their segregation at cell division. It also contributes to the segregational stability of plasmids. In the complex XerC specifically exchanges the top DNA strands. This Shigella flexneri serotype 5b (strain 8401) protein is Tyrosine recombinase XerC.